The following is a 63-amino-acid chain: Large ribosomal subunit protein uL29 (63 aa).

It belongs to the universal ribosomal protein uL29 family.

This Shigella flexneri protein is Large ribosomal subunit protein uL29.